Here is a 318-residue protein sequence, read N- to C-terminus: Ribose-phosphate pyrophosphokinase (318 aa).

Residues 40–42 (DGE) and 99–100 (RQ) each bind ATP. 2 residues coordinate Mg(2+): His134 and Asp173. Lys196 is an active-site residue. D-ribose 5-phosphate contacts are provided by residues Arg198, Asp222, and 226 to 230 (DTAGT).

This sequence belongs to the ribose-phosphate pyrophosphokinase family. Class I subfamily. Homohexamer. Requires Mg(2+) as cofactor.

It localises to the cytoplasm. The catalysed reaction is D-ribose 5-phosphate + ATP = 5-phospho-alpha-D-ribose 1-diphosphate + AMP + H(+). It participates in metabolic intermediate biosynthesis; 5-phospho-alpha-D-ribose 1-diphosphate biosynthesis; 5-phospho-alpha-D-ribose 1-diphosphate from D-ribose 5-phosphate (route I): step 1/1. In terms of biological role, involved in the biosynthesis of the central metabolite phospho-alpha-D-ribosyl-1-pyrophosphate (PRPP) via the transfer of pyrophosphoryl group from ATP to 1-hydroxyl of ribose-5-phosphate (Rib-5-P). The polypeptide is Ribose-phosphate pyrophosphokinase (Burkholderia pseudomallei (strain K96243)).